A 59-amino-acid polypeptide reads, in one-letter code: Large ribosomal subunit protein uL30 (59 aa).

Belongs to the universal ribosomal protein uL30 family. In terms of assembly, part of the 50S ribosomal subunit.

This is Large ribosomal subunit protein uL30 from Mycobacterium sp. (strain JLS).